A 242-amino-acid polypeptide reads, in one-letter code: MIKMTGVQKYFGDFHALTDIDLEIPRGQVVVVLGPSGSGKSTLCRTINRLETIEEGTIEIDGKVLPEEGKGLANLRADVGMVFQSFNLFPHLTIKDNVTLAPIKVRKMKKSEAEKLAMSLLERVGIANQADKYPAQLSGGQQQRVAIARALAMNPKIMLFDEPTSALDPEMVNEVLDVMASLAKEGMTMVCVTHEMGFARKAADRVLFMADGLIVEDTEPDSFFTNPKSDRAKDFLGKILAH.

Residues 2 to 236 (IKMTGVQKYF…PKSDRAKDFL (235 aa)) form the ABC transporter domain. Position 34–41 (34–41 (GPSGSGKS)) interacts with ATP.

Belongs to the ABC transporter superfamily. As to quaternary structure, the complex is composed of two ATP-binding proteins (GluA), two transmembrane proteins (GluC and GluD) and a solute-binding protein (GluB).

It is found in the cell membrane. The enzyme catalyses a polar amino acid(out) + ATP + H2O = a polar amino acid(in) + ADP + phosphate + H(+). It carries out the reaction L-glutamate(out) + ATP + H2O = L-glutamate(in) + ADP + phosphate + H(+). Functionally, part of the ABC transporter complex GluABCD involved in glutamate uptake. Probably responsible for energy coupling to the transport system. The sequence is that of Glutamate transport ATP-binding protein GluA from Corynebacterium glutamicum (strain ATCC 13032 / DSM 20300 / JCM 1318 / BCRC 11384 / CCUG 27702 / LMG 3730 / NBRC 12168 / NCIMB 10025 / NRRL B-2784 / 534).